The primary structure comprises 266 residues: Inositol-1-monophosphatase (266 aa).

Mg(2+) contacts are provided by Glu69, Asp86, Leu88, and Asp89. Glu69 is a binding site for substrate. Substrate is bound by residues 88–91, Arg185, and Asp214; that span reads LDGT. Residue Asp214 participates in Mg(2+) binding.

It belongs to the inositol monophosphatase superfamily. It depends on Mg(2+) as a cofactor.

It catalyses the reaction a myo-inositol phosphate + H2O = myo-inositol + phosphate. This Rhizobium meliloti (strain 1021) (Ensifer meliloti) protein is Inositol-1-monophosphatase (suhB).